A 708-amino-acid chain; its full sequence is Exocyst complex component 8 (708 aa).

Positions tyrosine 168–arginine 268 constitute a PH domain. A compositionally biased stretch (basic and acidic residues) spans alanine 271–alanine 282. Positions alanine 271 to valine 314 are disordered. Acidic residues predominate over residues phenylalanine 297–valine 314.

Belongs to the EXO84 family. The exocyst complex is composed of EXOC1, EXOC2, EXOC3, EXOC4, EXOC5, EXOC6, EXOC7 and EXOC8.

The protein resides in the cytoplasm. Its subcellular location is the perinuclear region. It localises to the cell projection. The protein localises to the growth cone. In terms of biological role, component of the exocyst complex involved in the docking of exocytic vesicles with fusion sites on the plasma membrane. In Gallus gallus (Chicken), this protein is Exocyst complex component 8 (EXOC8).